A 315-amino-acid chain; its full sequence is T-box transcription factor tbx-8 (315 aa).

A DNA-binding region (T-box) is located at residues 11 to 195 (EDQDKLWNLF…FNPFAKGFRE (185 aa)). The segment covering 193–203 (FREGSQSDRKR) has biased composition (basic and acidic residues). Disordered regions lie at residues 193–235 (FREG…SVSP) and 293–315 (PPPS…INVV). Over residues 205 to 225 (SPSADDSTTDESSSQVSSPQP) the composition is skewed to low complexity. Positions 305–315 (QEDIEQEINVV) are enriched in acidic residues.

It localises to the nucleus. Transcription factor. Involved in the control of early morphogenesis of the intestine, hypodermis and body-wall muscle. Involved in regulating expression of vab-7. Appears to have partially redundant function to tbx-9. This chain is T-box transcription factor tbx-8 (tbx-8), found in Caenorhabditis elegans.